The chain runs to 3726 residues: Histone-lysine N-methyltransferase trithorax (3726 aa).

Disordered regions lie at residues 1-247 (MGRS…ATTS), 321-352 (QLNS…GVGG), 371-429 (NEVA…TAKQ), and 509-624 (AGAS…RSTR). Low complexity-rich tracts occupy residues 31–53 (PAEP…GSSA) and 71–101 (GGAS…STGS). Residues 102 to 115 (GSSGSGSTNGGSVN) are compositionally biased toward gly residues. Positions 126–143 (LDKEAVTKDQNGDGDKTR) are enriched in basic and acidic residues. Over residues 147–205 (SSAPSGKLSAAASGKALSKSSRTFSASTSVTSSGRSSGSSPDGNSGASSDGASSGISCG) the composition is skewed to low complexity. Over residues 206 to 215 (KSTAKSTEAS) the composition is skewed to polar residues. Over residues 222–247 (TTGAGTCSSAKSSKASSGTTSEATTS) the composition is skewed to low complexity. Low complexity-rich tracts occupy residues 384–402 (AAAN…GPPA) and 509–525 (AGAS…SSSN). Positions 553–586 (PEDQNNAEDDEMDDDDDDEEAEEDDENEDDNDEA) are enriched in acidic residues. Positions 587–610 (VSEKSAETEKSAGADERDPDEKQL) are enriched in basic and acidic residues. The segment at residues 759 to 884 (PSACSICSAV…PGMRGEAAAR (126 aa)) is a DNA-binding region (nuclear receptor). Disordered regions lie at residues 915–937 (TSVK…PNPL), 981–1049 (LTKK…SHGV), 1115–1184 (VPSA…SSAK), and 1208–1231 (DIAT…KEHR). The span at 918 to 937 (KWKSSGDSTSALTSIKPNPL) shows a compositional bias: polar residues. The span at 986–1000 (SKQEKEKVKESEQSE) shows a compositional bias: basic and acidic residues. Positions 1031–1041 (PQTSTTTQPSA) are enriched in low complexity. Basic and acidic residues predominate over residues 1123–1132 (SPEKPTHIVT). Composition is skewed to low complexity over residues 1173 to 1183 (GTASAAGGSSA) and 1211 to 1223 (TSSS…NQTQ). 3 consecutive PHD-type zinc fingers follow at residues 1266–1347 (RALC…CTVC), 1348–1393 (YTCN…CLKC), and 1421–1482 (GNFC…CARR). Residues 1496–1663 (AVMEEFKASL…SEQFPWFQNE (168 aa)) form the Bromo domain. A disordered region spans residues 1573–1592 (FKDQQQQQQQRNANMNKPRV). Residues 1734 to 1774 (TRMCLFCRKSGEGLSGEEARLLYCGHDCWVHTNCAMWSAEV) form a C2HC pre-PHD-type zinc finger. The PHD-type 4 zinc-finger motif lies at 1795-1842 (IKCTVCGNRGATVGCNVRSCGEHYHYPCARSIDCAFLTDKSMYCPAHA). The 58-residue stretch at 1884–1941 (RVQFHIGSLEVRQLGAIVPRFSDSYEAVVPINFLCSRLYWSSKEPWKIVEYTVRTTIQ) folds into the FYR N-terminal domain. Disordered stretches follow at residues 1991-2019 (GGTD…PQQQ), 2068-2110 (TQAM…WPAS), 2283-2302 (CSPT…QGMT), 2649-2669 (GGGA…LGGT), 2866-2894 (SNLK…IASK), 3029-3096 (QHFS…PTPP), and 3347-3381 (RKEE…IQEP). Residues 2074 to 2087 (NQAQNQNQQAGGAN) show a composition bias toward low complexity. Over residues 3032 to 3043 (STSSSSSSSNCS) the composition is skewed to low complexity. A compositionally biased stretch (polar residues) spans 3044-3057 (LPTNVVNPMQQQAP). The region spanning 3386–3470 (GPHLLYEIQS…EKCSKYTPKY (85 aa)) is the FYR C-terminal domain. Residues 3588 to 3704 (DYVGVFRSHI…QGEELTYDYK (117 aa)) form the SET domain. Histidine 3598 and arginine 3600 together coordinate S-adenosyl-L-methionine. Cysteine 3641 is subject to S-methylcysteine; by autocatalysis. Residues tyrosine 3642 and 3665 to 3666 (NH) contribute to the S-adenosyl-L-methionine site. The Zn(2+) site is built by cysteine 3668, cysteine 3714, cysteine 3716, and cysteine 3721. The Post-SET domain occupies 3710-3726 (EKIPCSCGSKRCRKYLN).

The protein belongs to the class V-like SAM-binding methyltransferase superfamily. Histone-lysine methyltransferase family. TRX/MLL subfamily. Interacts (via SET domain) with ash1 (via SET domain). Interacts with Nup98. As to expression, maternal isoforms are expressed in syncytial blastoderm, confined to the ventral region fated to become mesoderm. An additional broad domain of expression arises during cellularization and is quickly resolved into four pair-rule-like stripes in the posterior half of the embryo.

It localises to the nucleus. Its subcellular location is the chromosome. It catalyses the reaction L-lysyl(9)-[histone H3] + 3 S-adenosyl-L-methionine = N(6),N(6),N(6)-trimethyl-L-lysyl(9)-[histone H3] + 3 S-adenosyl-L-homocysteine + 3 H(+). The catalysed reaction is L-cysteinyl-[protein] + S-adenosyl-L-methionine = S-methyl-L-cysteinyl-[protein] + S-adenosyl-L-homocysteine + H(+). Functionally, histone methyltransferase that methylates 'Lys-4' of histone H3 (H3K4me). H3K4me represents a specific tag for epigenetic transcriptional activation. Functions in segment determination through interaction with genes of bithorax (BX-C) and antennapedia (ANT-C) complexes. Acts as an activator of BX-C. Involved in the very early regulation of homeotic genes expressed only in the posterior region of the embryo. Also has auto-methylation activity on Cys-3641. The protein is Histone-lysine N-methyltransferase trithorax of Drosophila melanogaster (Fruit fly).